Reading from the N-terminus, the 501-residue chain is Lysine--tRNA ligase (501 aa).

Residues Glu412 and Glu419 each contribute to the Mg(2+) site.

Belongs to the class-II aminoacyl-tRNA synthetase family. As to quaternary structure, homodimer. Mg(2+) is required as a cofactor.

The protein resides in the cytoplasm. The enzyme catalyses tRNA(Lys) + L-lysine + ATP = L-lysyl-tRNA(Lys) + AMP + diphosphate. This Pasteurella multocida (strain Pm70) protein is Lysine--tRNA ligase (lysS).